Reading from the N-terminus, the 62-residue chain is UPF0434 protein azo1471 (62 aa).

The protein belongs to the UPF0434 family.

The sequence is that of UPF0434 protein azo1471 from Azoarcus sp. (strain BH72).